A 31-amino-acid chain; its full sequence is Photosystem II reaction center protein T (31 aa).

The helical transmembrane segment at 3-23 (SVAYIVVLTMALAVLFFAIAF) threads the bilayer.

The protein belongs to the PsbT family. As to quaternary structure, PSII is composed of 1 copy each of membrane proteins PsbA, PsbB, PsbC, PsbD, PsbE, PsbF, PsbH, PsbI, PsbJ, PsbK, PsbL, PsbM, PsbT, PsbX, PsbY, PsbZ, Psb30/Ycf12, peripheral proteins PsbO, CyanoQ (PsbQ), PsbU, PsbV and a large number of cofactors. It forms dimeric complexes.

Its subcellular location is the cellular thylakoid membrane. Functionally, found at the monomer-monomer interface of the photosystem II (PS II) dimer, plays a role in assembly and dimerization of PSII. PSII is a light-driven water plastoquinone oxidoreductase, using light energy to abstract electrons from H(2)O, generating a proton gradient subsequently used for ATP formation. The sequence is that of Photosystem II reaction center protein T from Crocosphaera subtropica (strain ATCC 51142 / BH68) (Cyanothece sp. (strain ATCC 51142)).